Here is a 130-residue protein sequence, read N- to C-terminus: Metastasis-suppressor KiSS-1 (130 aa).

Residues 1–19 (MISLASWQLLLLLCVASFG) form the signal peptide. The segment at 52–91 (RYAESKPGAAGLRARRTSPCPPVENPTGHQRPPCATRSRL) is disordered. A disulfide bridge links Cys-71 with Cys-85. The residue at position 110 (Tyr-110) is a Phosphotyrosine. Positions 110 to 119 (YNWNSFGLRY) are essential for receptor binding and receptor activation. The residue at position 119 (Tyr-119) is a Tyrosine amide.

It belongs to the KISS1 family. As to expression, highest levels in the cecum and colon. Moderate levels present in the liver, spleen, kidney, ovary, uterus and small intestine. Low levels in the stomach, pancreas and placenta. Expressed only moderately in the placenta. Persistent expression is detected in hypothalamus throughout postnatal development, with maximum expression levels at puberty in both male and female. Hypothalamic expression is sensitive to neonatal imprinting by estrogen. Expression is higher in the hypothalamus than in the brainstem and spinal cord. In the brain, metastin-like immunoreactivity is found mainly in three groups of cells: dorsomedial hypothalamic nucleus, nucleus of the solitary tract, and caudal ventrolateral medulla.

The protein resides in the secreted. Functionally, metastasis suppressor protein. May regulate events downstream of cell-matrix adhesion, perhaps involving cytoskeletal reorganization. Generates a C-terminally amidated peptide, metastin which functions as the endogenous ligand of the G-protein coupled receptor GPR54. The receptor is also essential for normal gonadotropin-released hormone physiology and for puberty. The hypothalamic KiSS1/GPR54 system is a pivotal factor in central regulation of the gonadotropic axis at puberty and in adulthood. Intracerebroventricular administration induces an increase in serum LH and FSH levels in prepubertal male and female as well as in adult animals. This Rattus norvegicus (Rat) protein is Metastasis-suppressor KiSS-1 (Kiss1).